The primary structure comprises 336 residues: Ketol-acid reductoisomerase (NADP(+)) (336 aa).

One can recognise a KARI N-terminal Rossmann domain in the interval 1-181 (MNVYYDKDCN…GGGRTGIIET (181 aa)). Residues 24–27 (YGSQ), arginine 47, serine 50, serine 52, and 82–85 (DEFQ) each bind NADP(+). Histidine 107 is a catalytic residue. Glycine 133 is an NADP(+) binding site. The KARI C-terminal knotted domain occupies 182–327 (TFQDETETDL…GKLRSMMPWI (146 aa)). Residues aspartate 190, glutamate 194, glutamate 226, and glutamate 230 each coordinate Mg(2+). Residue serine 251 participates in substrate binding.

It belongs to the ketol-acid reductoisomerase family. It depends on Mg(2+) as a cofactor.

It catalyses the reaction (2R)-2,3-dihydroxy-3-methylbutanoate + NADP(+) = (2S)-2-acetolactate + NADPH + H(+). The enzyme catalyses (2R,3R)-2,3-dihydroxy-3-methylpentanoate + NADP(+) = (S)-2-ethyl-2-hydroxy-3-oxobutanoate + NADPH + H(+). It participates in amino-acid biosynthesis; L-isoleucine biosynthesis; L-isoleucine from 2-oxobutanoate: step 2/4. It functions in the pathway amino-acid biosynthesis; L-valine biosynthesis; L-valine from pyruvate: step 2/4. Its function is as follows. Involved in the biosynthesis of branched-chain amino acids (BCAA). Catalyzes an alkyl-migration followed by a ketol-acid reduction of (S)-2-acetolactate (S2AL) to yield (R)-2,3-dihydroxy-isovalerate. In the isomerase reaction, S2AL is rearranged via a Mg-dependent methyl migration to produce 3-hydroxy-3-methyl-2-ketobutyrate (HMKB). In the reductase reaction, this 2-ketoacid undergoes a metal-dependent reduction by NADPH to yield (R)-2,3-dihydroxy-isovalerate. The chain is Ketol-acid reductoisomerase (NADP(+)) from Geotalea daltonii (strain DSM 22248 / JCM 15807 / FRC-32) (Geobacter daltonii).